We begin with the raw amino-acid sequence, 466 residues long: D-inositol 3-phosphate glycosyltransferase (466 aa).

The segment covering 1-12 (MRPMRAGAGAAG) has biased composition (low complexity). The segment at 1–22 (MRPMRAGAGAAGESCKDDGVRP) is disordered. Residue H43 participates in 1D-myo-inositol 3-phosphate binding. Residues 49-50 (QP) and G57 each bind UDP-N-acetyl-alpha-D-glucosamine. 1D-myo-inositol 3-phosphate is bound by residues 54-59 (DAGGMN), K112, Y145, T169, and R189. Residues R263, K268, and Q321 each coordinate UDP-N-acetyl-alpha-D-glucosamine. The Mg(2+) site is built by F330, H331, and V333. Positions 343 and 351 each coordinate UDP-N-acetyl-alpha-D-glucosamine. T357 contacts Mg(2+). The segment at 446 to 466 (VRDPVAARKPRRWTARRGVGA) is disordered.

Belongs to the glycosyltransferase group 1 family. MshA subfamily. In terms of assembly, homodimer.

It carries out the reaction 1D-myo-inositol 3-phosphate + UDP-N-acetyl-alpha-D-glucosamine = 1D-myo-inositol 2-acetamido-2-deoxy-alpha-D-glucopyranoside 3-phosphate + UDP + H(+). Catalyzes the transfer of a N-acetyl-glucosamine moiety to 1D-myo-inositol 3-phosphate to produce 1D-myo-inositol 2-acetamido-2-deoxy-glucopyranoside 3-phosphate in the mycothiol biosynthesis pathway. This is D-inositol 3-phosphate glycosyltransferase from Mycobacterium marinum (strain ATCC BAA-535 / M).